Here is a 930-residue protein sequence, read N- to C-terminus: Protein translocase subunit SecA (930 aa).

Residues Gln87, 105–109, and Asp515 each bind ATP; that span reads GEGKT. 4 residues coordinate Zn(2+): Cys914, Cys916, Cys925, and His926.

The protein belongs to the SecA family. As to quaternary structure, monomer and homodimer. Part of the essential Sec protein translocation apparatus which comprises SecA, SecYEG and auxiliary proteins SecDF-YajC and YidC. Zn(2+) is required as a cofactor.

The protein localises to the cell inner membrane. The protein resides in the cytoplasm. It catalyses the reaction ATP + H2O + cellular proteinSide 1 = ADP + phosphate + cellular proteinSide 2.. In terms of biological role, part of the Sec protein translocase complex. Interacts with the SecYEG preprotein conducting channel. Has a central role in coupling the hydrolysis of ATP to the transfer of proteins into and across the cell membrane, serving both as a receptor for the preprotein-SecB complex and as an ATP-driven molecular motor driving the stepwise translocation of polypeptide chains across the membrane. This is Protein translocase subunit SecA from Burkholderia vietnamiensis (strain G4 / LMG 22486) (Burkholderia cepacia (strain R1808)).